The chain runs to 447 residues: Methyl-coenzyme M reductase I subunit beta (447 aa).

Residue Tyr371 coordinates coenzyme M. Gly373 serves as a coordination point for coenzyme B.

This sequence belongs to the methyl-coenzyme M reductase beta subunit family. As to quaternary structure, MCR is a hexamer of two alpha, two beta, and two gamma chains, forming a dimer of heterotrimers. Coenzyme F430 is required as a cofactor.

The protein localises to the cytoplasm. It catalyses the reaction coenzyme B + methyl-coenzyme M = methane + coenzyme M-coenzyme B heterodisulfide. It participates in one-carbon metabolism; methyl-coenzyme M reduction; methane from methyl-coenzyme M: step 1/1. Its function is as follows. Component of the methyl-coenzyme M reductase (MCR) I that catalyzes the reductive cleavage of methyl-coenzyme M (CoM-S-CH3 or 2-(methylthio)ethanesulfonate) using coenzyme B (CoB or 7-mercaptoheptanoylthreonine phosphate) as reductant which results in the production of methane and the mixed heterodisulfide of CoB and CoM (CoM-S-S-CoB). This is the final step in methanogenesis. This Methanocaldococcus jannaschii (strain ATCC 43067 / DSM 2661 / JAL-1 / JCM 10045 / NBRC 100440) (Methanococcus jannaschii) protein is Methyl-coenzyme M reductase I subunit beta (mcrB).